Consider the following 1377-residue polypeptide: DNA-directed RNA polymerase subunit beta' (1377 aa).

Zn(2+) is bound by residues Cys60, Cys62, Cys75, and Cys78. Positions 449, 451, and 453 each coordinate Mg(2+). Residues Cys777, Cys851, Cys858, and Cys861 each coordinate Zn(2+).

It belongs to the RNA polymerase beta' chain family. In terms of assembly, the RNAP catalytic core consists of 2 alpha, 1 beta, 1 beta' and 1 omega subunit. When a sigma factor is associated with the core the holoenzyme is formed, which can initiate transcription. Mg(2+) serves as cofactor. The cofactor is Zn(2+).

The catalysed reaction is RNA(n) + a ribonucleoside 5'-triphosphate = RNA(n+1) + diphosphate. DNA-dependent RNA polymerase catalyzes the transcription of DNA into RNA using the four ribonucleoside triphosphates as substrates. The polypeptide is DNA-directed RNA polymerase subunit beta' (Borrelia recurrentis (strain A1)).